We begin with the raw amino-acid sequence, 603 residues long: Conglutin beta 2 (603 aa).

The N-terminal stretch at 1–30 is a signal peptide; it reads MANMRVKFPTLVLLLGIVFLMAVSIGIAYG. Over residues 36–105 the composition is skewed to basic and acidic residues; it reads KNHERPQERE…REPSRGREQE (70 aa). Disordered stretches follow at residues 36-177, 343-363, and 375-399; these read KNHE…RNPY, DGQE…DQGV, and LRKH…LRSD. Residues 137 to 147 show a composition bias toward low complexity; that stretch reads QGSSSSSGRQS. A compositionally biased stretch (basic and acidic residues) spans 148–172; it reads GYERREQREEREQQQEQDSRSESRR. Positions 177-335 constitute a Cupin type-1 1 domain; that stretch reads YYFSYERFQT…TFNTRYEEIQ (159 aa). Positions 381–393 are enriched in low complexity; that stretch reads SSSGKGKPSESGP. One can recognise a Cupin type-1 2 domain in the interval 394–554; it reads FNLRSDEPIY…TFPGSVEDVE (161 aa). An N-linked (GlcNAc...) asparagine glycan is attached at N504. The segment covering 564 to 574 has biased composition (low complexity); that stretch reads YFANAQPQQQQ. Residues 564-583 are disordered; it reads YFANAQPQQQQQREKEGRRG.

It belongs to the 7S seed storage protein family. In terms of assembly, component of globulins complexes which accumulate in seeds.

Functionally, seed storage protein. Accumulates during seed development and is hydrolyzed after germination to provide a carbon and nitrogen source for the developing seedling. This Lupinus angustifolius (Narrow-leaved blue lupine) protein is Conglutin beta 2.